A 607-amino-acid chain; its full sequence is UvrABC system protein C (607 aa).

The region spanning 16–94 (ARPGVYRMFD…IKQWRPPYNI (79 aa)) is the GIY-YIG domain. Residues 203-238 (QQLGNELNAEMEKAAMALNFEKAAELRDQIALLRRV) form the UVR domain.

This sequence belongs to the UvrC family. As to quaternary structure, interacts with UvrB in an incision complex.

The protein resides in the cytoplasm. Its function is as follows. The UvrABC repair system catalyzes the recognition and processing of DNA lesions. UvrC both incises the 5' and 3' sides of the lesion. The N-terminal half is responsible for the 3' incision and the C-terminal half is responsible for the 5' incision. In Pseudomonas putida (strain W619), this protein is UvrABC system protein C.